The primary structure comprises 1463 residues: MSDKFQLLLQQIGMPLDARQSGAFSTATIEKVVLHKVSKLWEFTFRFETPLPLMDYQLFKARLATEFEKVGNKIQFSIVSDAEAFEAGLVEAYYPEAFTEDLCQSAGFKALFQPLEVAYRDGVLWIKGPETIDTDHFRKNHLPNLVEQYKRFGFGNLAVDIQVCQEMTQQQAEIFHAQNAEIYQQANEENLAALEQLAQMAPPPEAAQPFVPEYKKNRPAKVNIEKAEITPMIEVDSEENRIVFEGLVFEVEQKTTKTGRVIINFKMTDYTSSFTLQKWAKNEEEAQKFDMVKKGNWLRVRGNVETNNFTRDLTMNVQEVQEVKKEIRKDLMPEGEKRVEFHAHTNMSTMDALPAVEDLVARAAAWGHKAVAITDHGNVQSFPHGYHAARKAGIKPLFGMEANIVEDSVPIAYNEADVVLSDATYVVFDVETTGLSAVNNALIQIAASKMHKGNIIAEFDEFIDPGHPLSQFTTDLTGITDEHVRGSKPLEQVLREFQDFCQDSVMVAHNATFDVGFMNVNYERAGLPIISQPVIDTLEFARNLYPDFKRHGLGPLTKRFGVALEHHHMANYDAEATGRLLFIFLKDALEKHNLTNLNQLNTELIAEDSYKKARVKHATLYVINQVGLKNMFKLVSLSNTKYFEGVPRIPRTVLNAHREGLILGTACQEGEVFDDLLSKGIDEAVKTAAYYDFIEVMPPALYAPMIAKEQFKDMAEIEETIKQLIEVGRRAGLPVLATGNVHYIDPEEEIYREIIVRALGQGAPINWTIGNGENAQPAPLPKAHFRTTSEMLDEFAFLGESLAREIVITNPNAMLDRFEDVQVVKTDLYTPYIEKAEETVAELTYQKAFEIYGNPLPDIIDLRIEKELTSILGNGFAVIYLASQMLVHRSNERGYLVGSRGSVGSSFVATMIGITEVNPMPPHYVCPNCQHSEFITDGSYGSGFDLPDKDCEKCGTKYKKDGQDIPFETFLGFDGDKVPDIDLNFSGDDQPSAHLDVRDIFGEENAFRAGTVGTVAAKTAYGFVRGYERDYGKFYRDVEVERLAAGAAGVKRTTGQHPGGIIVFPDYMDVYDFTPVQYPADDVTASWQTTHFNFHDIDENVLKLDILGHDDPTMVRKLQDLSGIDPQTIPADDKGVMALFSGTEILGVTPEQIGTPTGMLGIPEFGTNFVRGMVEETKPTTFSELLQLSGLSHGTDVWLGNAQDLIKAGIANLSTVIGCRDDIMVYLMHAGLPPKMAFNIMERVRKGLWLKISEEERNGYIQAMKDNKVPDWYIESCGKIKYMFPKAHAAAYVMMALRVAYFKVHHPLYYYCAYFSIRAKAFDLATMSGGLERVKAKMEEIALKKKNNEASNVEQDLYTTLELVNEMLERGFKFGKLDLYKSHATDFLIEEDTLIPPFVAMDGLGENVAKQVVAARAEGEFLSKTELRKRGGLSGTLVEKMDEMGILGKMPEDNQLSLFDDLF.

The 157-residue stretch at 425 to 581 (YVVFDVETTG…YDAEATGRLL (157 aa)) folds into the Exonuclease domain.

This sequence belongs to the DNA polymerase type-C family. PolC subfamily.

The protein localises to the cytoplasm. The catalysed reaction is DNA(n) + a 2'-deoxyribonucleoside 5'-triphosphate = DNA(n+1) + diphosphate. Its function is as follows. Required for replicative DNA synthesis. This DNA polymerase also exhibits 3' to 5' exonuclease activity. The polypeptide is DNA polymerase III PolC-type (Streptococcus suis (strain 98HAH33)).